A 207-amino-acid polypeptide reads, in one-letter code: MANYDVLKLDGTKSGSIELSDAVFGIEPNNSVLFEAINLQRASLRQGTHAVKNRSAVSGGGRKPWKQKGTGRARQGTIRAPQWRGGGIVFGPTPRSYAYKMPKKMRRLALRSALSFKVQENGLTVVDAFNFEAPKTKEFKNVLSTLEQPKKVLVVTENEDVNVELSARNIPGVQVTTAQGLNVLDITNADSLVITEAAAKKVEEVLG.

Residues 50–76 form a disordered region; sequence AVKNRSAVSGGGRKPWKQKGTGRARQG.

Belongs to the universal ribosomal protein uL4 family. As to quaternary structure, part of the 50S ribosomal subunit.

One of the primary rRNA binding proteins, this protein initially binds near the 5'-end of the 23S rRNA. It is important during the early stages of 50S assembly. It makes multiple contacts with different domains of the 23S rRNA in the assembled 50S subunit and ribosome. Functionally, forms part of the polypeptide exit tunnel. The protein is Large ribosomal subunit protein uL4 of Staphylococcus aureus (strain MRSA252).